A 357-amino-acid polypeptide reads, in one-letter code: CCN family member 3 (357 aa).

Residues 1-31 form the signal peptide; the sequence is MQSVQSTSFCLRKQCLCLTFLLLHLLGQVAA. Positions 32–105 constitute an IGFBP N-terminal domain; sequence TQRCPPQCPG…SNQTGICTAV (74 aa). 6 disulfide bridges follow: C35/C61, C39/C63, C43/C64, C50/C67, C75/C89, and C81/C102. An N-linked (GlcNAc...) asparagine glycan is attached at N97. The VWFC domain maps to 108–174; that stretch reads DNCVFDGVIY…GECCEKWICG (67 aa). The 46-residue stretch at 205-250 folds into the TSP type-1 domain; sequence NCIEQTTEWTACSKSCGMGFSTRVTNRNRQCEMLKQTRLCMVRPCE. C244 carries the S-palmitoyl cysteine lipid modification. Intrachain disulfides connect C264/C301, C281/C315, C292/C331, C295/C333, and C300/C337. The 75-residue stretch at 264-338 folds into the CTCK domain; it reads CLRTKKSLKA…GTCTCHTNCP (75 aa). The N-linked (GlcNAc...) asparagine glycan is linked to N280.

This sequence belongs to the CCN family. Interacts with FBLN1. Interacts (via CTCK domain) with NOTCH1 (via the EGF-like repeat region). Interacts with GJA1/CX43. Interacts with ITGA5:ITGB1, ITGAV:ITGB3 and ITGAV:ITGB5. Interacts with ZDHHC22; the interaction may lead to CCN3 palmitoylation. Post-translationally, may be palmitoylated on Cys-244, which is important for extracellular secretion. As to expression, expressed in endothelial cells (at protein level). Expressed in bone marrow and thymic cells.

Its subcellular location is the secreted. It localises to the cytoplasm. The protein resides in the cell junction. It is found in the gap junction. Immediate-early protein playing a role in various cellular processes including proliferation, adhesion, migration, differentiation and survival. Acts by binding to integrins or membrane receptors such as NOTCH1. Essential regulator of hematopoietic stem and progenitor cell function. Inhibits myogenic differentiation through the activation of Notch-signaling pathway. Inhibits vascular smooth muscle cells proliferation by increasing expression of cell-cycle regulators such as CDKN2B or CDKN1A independently of TGFB1 signaling. Ligand of integrins ITGAV:ITGB3 and ITGA5:ITGB1, acts directly upon endothelial cells to stimulate pro-angiogenic activities and induces angiogenesis. In endothelial cells, supports cell adhesion, induces directed cell migration (chemotaxis) and promotes cell survival. Also plays a role in cutaneous wound healing acting as integrin receptor ligand. Supports skin fibroblast adhesion through ITGA5:ITGB1 and ITGA6:ITGB1 and induces fibroblast chemotaxis through ITGAV:ITGB5. Seems to enhance bFGF-induced DNA synthesis in fibroblasts. Involved in bone regeneration as a negative regulator. Enhances the articular chondrocytic phenotype, whereas it repressed the one representing endochondral ossification. Impairs pancreatic beta-cell function, inhibits beta-cell proliferation and insulin secretion. Plays a role as negative regulator of endothelial pro-inflammatory activation reducing monocyte adhesion, its anti-inflammatory effects occur secondary to the inhibition of NF-kappaB signaling pathway. Contributes to the control and coordination of inflammatory processes in atherosclerosis. Attenuates inflammatory pain through regulation of IL1B- and TNF-induced MMP9, MMP2 and CCL2 expression. Inhibits MMP9 expression through ITGB1 engagement. Brain osteoanabolic hormone. Drives osteogenesis in osteochondral skeletal stem cells. During lactation, maintains the maternal skeleton and viability of offspring. In Homo sapiens (Human), this protein is CCN family member 3.